Reading from the N-terminus, the 385-residue chain is Isocitrate dehydrogenase [NAD] subunit beta, mitochondrial (385 aa).

The N-terminal 34 residues, Met1–Ala34, are a transit peptide targeting the mitochondrion. The residue at position 199 (Lys199) is an N6-acetyllysine.

It belongs to the isocitrate and isopropylmalate dehydrogenases family. As to quaternary structure, heterooligomer of subunits alpha (IDH3A), beta (IDH3B), and gamma (IDH3G) in the apparent ratio of 2:1:1. The heterodimer containing one IDH3A and one IDH3B subunit and the heterodimer containing one IDH3A and one IDH3G subunit assemble into a heterotetramer (which contains two subunits of IDH3A, one of IDH3B and one of IDH3G) and further into the heterooctamer.

It localises to the mitochondrion. With respect to regulation, the heterotetramer and the heterodimer composed of IDH3A and IDH3G subunits can be allosterically activated by citrate (CIT) or/and ADP, and the two activators can act independently or synergistically. The heterodimer composed of IDH3A and IDH3B subunits cannot be allosterically regulated and the allosteric regulation of the heterotetramer is through the IDH3G subunit and not the IDH3B subunit. The IDH3G subunit contains the allosteric site which consists of a CIT-binding site and an ADP-binding site, and the binding of CIT and ADP causes conformational changes at the allosteric site which are transmitted to the active site in the catalytic subunit (IDH3A) through a cascade of conformational changes at the heterodimer interface, leading to stabilization of the isocitrate-binding at the active site and thus activation of the enzyme. ATP can activate the heterotetramer and the heterodimer composed of IDH3A and IDH3G subunits at low concentrations but inhibits their activities at high concentrations, whereas ATP exhibits only inhibitory effect on the heterodimer composed of IDH3A and IDH3B subunits. Functionally, plays a structural role to facilitate the assembly and ensure the full activity of the enzyme catalyzing the decarboxylation of isocitrate (ICT) into alpha-ketoglutarate. The heterodimer composed of the alpha (IDH3A) and beta (IDH3B) subunits and the heterodimer composed of the alpha (IDH3A) and gamma (IDH3G) subunits, have considerable basal activity but the full activity of the heterotetramer (containing two subunits of IDH3A, one of IDH3B and one of IDH3G) requires the assembly and cooperative function of both heterodimers. This chain is Isocitrate dehydrogenase [NAD] subunit beta, mitochondrial (IDH3B), found in Homo sapiens (Human).